Consider the following 707-residue polypeptide: Alpha-hemolysin translocation ATP-binding protein HlyB (707 aa).

The Peptidase C39 domain occupies 2 to 125; the sequence is DFHHKNNYGL…DLYQGNIILI (124 aa). The active site involves His83. The region spanning 154-436 is the ABC transmembrane type-1 domain; it reads FIETLIVSVF…LAQLWQDFQQ (283 aa). The next 5 membrane-spanning stretches (helical) occupy residues 158-178, 191-211, 269-289, 295-315, and 387-407; these read LIVS…FQVV, LNII…LSGL, ALTS…MWYY, LVIL…SPIL, and AVMI…DLSI. An ABC transporter domain is found at 468–703; it reads ISFRNIRFRY…PESLYHYLHQ (236 aa). 502 to 509 provides a ligand contact to ATP; that stretch reads GRSGSGKS.

It belongs to the ABC transporter superfamily. Protein-1 exporter (TC 3.A.1.109) family.

It localises to the cell membrane. Its function is as follows. Involved in the export of hemolysin A. The protein is Alpha-hemolysin translocation ATP-binding protein HlyB (hlyB) of Proteus vulgaris.